The primary structure comprises 325 residues: Brorin (325 aa).

The signal sequence occupies residues 1 to 27 (MPSSTAMAVGALSSSLLVTCCLMVALC). The interval 37-121 (AQAPEQPGQE…RPRGDTPQAE (85 aa)) is disordered. Basic and acidic residues-rich tracts occupy residues 44 to 56 (GQEKREHASRDGP) and 64 to 78 (RPARDEGGSGRDWKS). The Mediates cell adhesion signature appears at 114–116 (RGD). 2 VWFC domains span residues 153 to 212 (KGCV…PQCK) and 216 to 274 (NYCE…PICK).

In terms of assembly, peripherally associated with AMPAR complex. AMPAR complex consists of an inner core made of 4 pore-forming GluA/GRIA proteins (GRIA1, GRIA2, GRIA3 and GRIA4) and 4 major auxiliary subunits arranged in a twofold symmetry. One of the two pairs of distinct binding sites is occupied either by CNIH2, CNIH3 or CACNG2, CACNG3. The other harbors CACNG2, CACNG3, CACNG4, CACNG8 or GSG1L. This inner core of AMPAR complex is complemented by outer core constituents binding directly to the GluA/GRIA proteins at sites distinct from the interaction sites of the inner core constituents. Outer core constituents include at least PRRT1, PRRT2, CKAMP44/SHISA9, FRRS1L and NRN1. The proteins of the inner and outer core serve as a platform for other, more peripherally associated AMPAR constituents, including VWC2. Alone or in combination, these auxiliary subunits control the gating and pharmacology of the AMPAR complex and profoundly impact their biogenesis and protein processing.

The protein resides in the secreted. It is found in the extracellular space. The protein localises to the extracellular matrix. Its subcellular location is the basement membrane. It localises to the synapse. Its function is as follows. BMP antagonist which may play a role in neural development. Promotes cell adhesion. The chain is Brorin (VWC2) from Homo sapiens (Human).